A 261-amino-acid polypeptide reads, in one-letter code: Enolase-phosphatase E1 (261 aa).

Positions 16 and 18 each coordinate Mg(2+). Substrate-binding positions include 153–154 and Lys-187; that span reads SS. Asp-212 is a binding site for Mg(2+).

The protein belongs to the HAD-like hydrolase superfamily. MasA/MtnC family. Monomer. Requires Mg(2+) as cofactor.

The protein localises to the cytoplasm. It localises to the nucleus. It carries out the reaction 5-methylsulfanyl-2,3-dioxopentyl phosphate + H2O = 1,2-dihydroxy-5-(methylsulfanyl)pent-1-en-3-one + phosphate. The protein operates within amino-acid biosynthesis; L-methionine biosynthesis via salvage pathway; L-methionine from S-methyl-5-thio-alpha-D-ribose 1-phosphate: step 3/6. It functions in the pathway amino-acid biosynthesis; L-methionine biosynthesis via salvage pathway; L-methionine from S-methyl-5-thio-alpha-D-ribose 1-phosphate: step 4/6. Its function is as follows. Bifunctional enzyme that catalyzes the enolization of 2,3-diketo-5-methylthiopentyl-1-phosphate (DK-MTP-1-P) into the intermediate 2-hydroxy-3-keto-5-methylthiopentenyl-1-phosphate (HK-MTPenyl-1-P), which is then dephosphorylated to form the acireductone 1,2-dihydroxy-3-keto-5-methylthiopentene (DHK-MTPene). The protein is Enolase-phosphatase E1 of Bos taurus (Bovine).